Here is a 147-residue protein sequence, read N- to C-terminus: Ribosome-binding factor A (147 aa).

Positions 122–147 are disordered; sequence QQQFGSVDDDVIENDIEESDDTEGKV. Acidic residues predominate over residues 128 to 147; that stretch reads VDDDVIENDIEESDDTEGKV.

Belongs to the RbfA family. Monomer. Binds 30S ribosomal subunits, but not 50S ribosomal subunits or 70S ribosomes.

The protein localises to the cytoplasm. Its function is as follows. One of several proteins that assist in the late maturation steps of the functional core of the 30S ribosomal subunit. Associates with free 30S ribosomal subunits (but not with 30S subunits that are part of 70S ribosomes or polysomes). Required for efficient processing of 16S rRNA. May interact with the 5'-terminal helix region of 16S rRNA. This Shewanella oneidensis (strain ATCC 700550 / JCM 31522 / CIP 106686 / LMG 19005 / NCIMB 14063 / MR-1) protein is Ribosome-binding factor A.